A 1588-amino-acid chain; its full sequence is Centrosomal protein of 170 kDa (1588 aa).

In terms of domain architecture, FHA spans 23–73; it reads IFVGRDDCELMLQSRSVDKQHAVINYDASMDEHLVKDLGSLNGTFVNDVRI. Disordered regions lie at residues 121–172, 299–323, 338–447, and 461–508; these read LSQK…MPRG, KFTS…GIQT, QNNP…EEPS, and SGSL…NPNS. Residue serine 141 is modified to Phosphoserine. Positions 155-164 are enriched in basic and acidic residues; the sequence is EALKSEEKPM. The segment covering 347-357 has biased composition (basic and acidic residues); the sequence is ERTEEDSKSIK. Residues serine 355 and serine 358 each carry the phosphoserine modification. At tyrosine 363 the chain carries Phosphotyrosine. Basic and acidic residues predominate over residues 407–418; that stretch reads KKKAQSTEKHQE. Serine 443, serine 463, and serine 494 each carry phosphoserine. A Phosphothreonine modification is found at threonine 498. Residues serine 568, serine 577, serine 628, and serine 631 each carry the phosphoserine modification. A disordered region spans residues 602–854; it reads ELSATVENET…PHINKQNSSV (253 aa). The segment covering 620–631 has biased composition (polar residues); it reads LRSTSCTTSLAS. Threonine 639 is subject to Phosphothreonine. The span at 645-654 shows a compositional bias: basic and acidic residues; the sequence is NEEKLLESSR. Serine 662 bears the Phosphoserine mark. Over residues 663–691 the composition is skewed to basic and acidic residues; that stretch reads EIGEKQDTELQEKEAQVYQSEKHDADRGL. Residue serine 718 is modified to Phosphoserine. Residues 720-731 are compositionally biased toward basic and acidic residues; the sequence is SKEKSETEKETS. Position 752 is a phosphothreonine (threonine 752). Basic and acidic residues-rich tracts occupy residues 764–774 and 789–821; these read HIDKCREESSK and SKGD…KESS. A compositionally biased stretch (polar residues) spans 822-839; that stretch reads KSLVRQGSFTIDKPSSNI. Serine 829, serine 870, and serine 872 each carry phosphoserine. The segment at 844–1588 is targeting to microtubules; the sequence is IPHINKQNSS…GEEEDVTVHE (745 aa). Positions 899 to 908 are enriched in basic and acidic residues; it reads LREDNNKTDE. 2 disordered regions span residues 899 to 1222 and 1228 to 1247; these read LRED…RWRR and ASTS…HTRL. Threonine 906 and threonine 912 each carry phosphothreonine. Over residues 913–937 the composition is skewed to polar residues; sequence PSYNRDNSISPESDVDTASTISLVT. Residues serine 922, serine 925, and serine 950 each carry the phosphoserine modification. A compositionally biased stretch (basic and acidic residues) spans 967–980; the sequence is DVTKSGSREKIEKK. The residue at position 1008 (serine 1008) is a Phosphoserine. Threonine 1012 bears the Phosphothreonine mark. A compositionally biased stretch (polar residues) spans 1028-1038; the sequence is IMSSDQETYSC. Phosphothreonine is present on threonine 1047. At serine 1048 the chain carries Phosphoserine. The segment covering 1049-1062 has biased composition (basic and acidic residues); the sequence is ADEHNIHSKLEGGK. Residues 1075 to 1093 are compositionally biased toward low complexity; the sequence is STSKSTTLPRPRPTRTSLL. Serine 1102, serine 1104, serine 1122, serine 1123, serine 1135, serine 1150, and serine 1155 each carry phosphoserine. Residues 1103–1588 are targeting to centrosomes; that stretch reads DSELADADKA…GEEEDVTVHE (486 aa). Low complexity predominate over residues 1112–1128; the sequence is ASVASEVSTTSSTSKPP. Residues 1158-1173 are compositionally biased toward low complexity; sequence EATISRSSASARTAEA. Serine 1188, serine 1195, serine 1200, serine 1229, serine 1231, serine 1241, serine 1260, and serine 1270 each carry phosphoserine. Residues 1191–1218 show a composition bias toward polar residues; the sequence is TRANSISRLSDSKVKSMSSTHGSPSVNS. The disordered stretch occupies residues 1315–1334; that stretch reads SVTSSGTAPSTTVSTAATTP. Phosphoserine is present on serine 1362. Residues 1370-1398 form a disordered region; the sequence is PLVHSKTPEGNNGRSVDSRPQPAEHPDHL. Positions 1467–1495 form a coiled coil; the sequence is KTSSMEISSILQELKRVEKQLQVINAMID. The disordered stretch occupies residues 1511–1540; that stretch reads AILPSPPKQKSSPVNNHSSPSQTPALCPPE. A compositionally biased stretch (polar residues) spans 1518–1534; the sequence is KQKSSPVNNHSSPSQTP. A phosphoserine mark is found at serine 1521 and serine 1522.

Belongs to the CEP170 family. As to quaternary structure, interacts with CCDC68 and CCDC120; leading to recruitment to centrosomes. Interacts with PLK1. Interacts with NIN. Interacts with FHDC1. Interacts with CCDC61. Interacts with TBK1; efficient complex formation may be dependent on the presence of CCDC61. Phosphorylated; probably by PLK1.

It localises to the cytoplasm. The protein localises to the cytoskeleton. Its subcellular location is the microtubule organizing center. The protein resides in the centrosome. It is found in the centriole. It localises to the spindle. In terms of biological role, plays a role in microtubule organization. Required for centriole subdistal appendage assembly. The sequence is that of Centrosomal protein of 170 kDa (Cep170) from Mus musculus (Mouse).